The sequence spans 433 residues: Adenylosuccinate synthetase (433 aa).

GTP is bound by residues 13–19 (GDEGKGK) and 41–43 (GHT). Residue D14 is the Proton acceptor of the active site. 2 residues coordinate Mg(2+): D14 and G41. Residues 14–17 (DEGK), 39–42 (NAGH), T130, R144, Q225, T240, and R304 contribute to the IMP site. The active-site Proton donor is H42. 300 to 306 (STTGRKR) contacts substrate. GTP is bound by residues R306, 332-334 (KLD), and 414-416 (STG).

The protein belongs to the adenylosuccinate synthetase family. In terms of assembly, homodimer. Mg(2+) serves as cofactor.

It is found in the cytoplasm. The enzyme catalyses IMP + L-aspartate + GTP = N(6)-(1,2-dicarboxyethyl)-AMP + GDP + phosphate + 2 H(+). It functions in the pathway purine metabolism; AMP biosynthesis via de novo pathway; AMP from IMP: step 1/2. Functionally, plays an important role in the de novo pathway of purine nucleotide biosynthesis. Catalyzes the first committed step in the biosynthesis of AMP from IMP. The sequence is that of Adenylosuccinate synthetase from Buchnera aphidicola subsp. Acyrthosiphon pisum (strain Tuc7).